The chain runs to 301 residues: Glycine--tRNA ligase alpha subunit (301 aa).

This sequence belongs to the class-II aminoacyl-tRNA synthetase family. Tetramer of two alpha and two beta subunits.

It is found in the cytoplasm. The enzyme catalyses tRNA(Gly) + glycine + ATP = glycyl-tRNA(Gly) + AMP + diphosphate. The sequence is that of Glycine--tRNA ligase alpha subunit from Shewanella halifaxensis (strain HAW-EB4).